A 371-amino-acid chain; its full sequence is MRLIIAGGGTGGHLFPGIAIADEFLARSPENEVLFVGTERGIEARLLPKLGYKLALISASGMKGMGTIKKIMSAGRLLYGYSQSRKILKEFRPDLVLGVGGYASAPIVLAARGMGVRRFIHEQNAFPGLTNKVLGRIVDGVFISMPEAESFFPKEITQMTGNPIRKEILWGFQERVRSVGDTFSILVFGGSAGAQRVNSALLEALPHLEGVKGKLRITHQTGEKDAARVREGYQAQGVQAQVLSFIDDMSAAYGAADLVVCRAGATTIAEVTACGKGCIFIPFPYAADDHQRKNAESLVHKNAGVMILEEDLTGERLAAKILDLMEHPAELAEMEKNARALAQLDAAQAIVAAMVTKNQERDKDKENQRAR.

Residues 10–12 (TGG), Asn-124, Arg-165, Ser-191, Ile-246, and Gln-291 each bind UDP-N-acetyl-alpha-D-glucosamine.

It belongs to the glycosyltransferase 28 family. MurG subfamily.

The protein resides in the cell inner membrane. It catalyses the reaction di-trans,octa-cis-undecaprenyl diphospho-N-acetyl-alpha-D-muramoyl-L-alanyl-D-glutamyl-meso-2,6-diaminopimeloyl-D-alanyl-D-alanine + UDP-N-acetyl-alpha-D-glucosamine = di-trans,octa-cis-undecaprenyl diphospho-[N-acetyl-alpha-D-glucosaminyl-(1-&gt;4)]-N-acetyl-alpha-D-muramoyl-L-alanyl-D-glutamyl-meso-2,6-diaminopimeloyl-D-alanyl-D-alanine + UDP + H(+). It participates in cell wall biogenesis; peptidoglycan biosynthesis. In terms of biological role, cell wall formation. Catalyzes the transfer of a GlcNAc subunit on undecaprenyl-pyrophosphoryl-MurNAc-pentapeptide (lipid intermediate I) to form undecaprenyl-pyrophosphoryl-MurNAc-(pentapeptide)GlcNAc (lipid intermediate II). The polypeptide is UDP-N-acetylglucosamine--N-acetylmuramyl-(pentapeptide) pyrophosphoryl-undecaprenol N-acetylglucosamine transferase (Geobacter sp. (strain M21)).